The chain runs to 430 residues: Glutamate-1-semialdehyde 2,1-aminomutase (430 aa).

Position 265 is an N6-(pyridoxal phosphate)lysine (lysine 265).

Belongs to the class-III pyridoxal-phosphate-dependent aminotransferase family. HemL subfamily. As to quaternary structure, homodimer. Pyridoxal 5'-phosphate serves as cofactor.

It is found in the cytoplasm. It catalyses the reaction (S)-4-amino-5-oxopentanoate = 5-aminolevulinate. It participates in porphyrin-containing compound metabolism; protoporphyrin-IX biosynthesis; 5-aminolevulinate from L-glutamyl-tRNA(Glu): step 2/2. The protein is Glutamate-1-semialdehyde 2,1-aminomutase of Shewanella putrefaciens (strain CN-32 / ATCC BAA-453).